Here is a 96-residue protein sequence, read N- to C-terminus: MNIRPLHDRVIIKREEVETRSAGGIVLTGSAATKSTRAKVLAVGKGRILENGTVQPLDVKVGDTVIFNDGYGVKAEKIDGEEVLIISENDILAIVE.

It belongs to the GroES chaperonin family. Heptamer of 7 subunits arranged in a ring. Interacts with the chaperonin GroEL.

The protein localises to the cytoplasm. Its function is as follows. Together with the chaperonin GroEL, plays an essential role in assisting protein folding. The GroEL-GroES system forms a nano-cage that allows encapsulation of the non-native substrate proteins and provides a physical environment optimized to promote and accelerate protein folding. GroES binds to the apical surface of the GroEL ring, thereby capping the opening of the GroEL channel. The protein is Co-chaperonin GroES of Haemophilus influenzae (strain 86-028NP).